Consider the following 213-residue polypeptide: Ephrin-A2 (213 aa).

Residues Met-1–Ala-24 form the signal peptide. The region spanning Ser-34–Asn-174 is the Ephrin RBD domain. An N-linked (GlcNAc...) asparagine glycan is attached at Asn-42. Cystine bridges form between Cys-73/Cys-114 and Cys-102/Cys-163. 2 N-linked (GlcNAc...) asparagine glycosylation sites follow: Asn-174 and Asn-188. The GPI-anchor amidated asparagine moiety is linked to residue Asn-188. A propeptide spans Asn-189–Ser-213 (removed in mature form).

This sequence belongs to the ephrin family. In terms of assembly, binds to the receptor tyrosine kinases EPHA3, EPHA4 and EPHA5. Interacts with EPHA8; activates EPHA8.

It is found in the cell membrane. Its function is as follows. Cell surface GPI-bound ligand for Eph receptors, a family of receptor tyrosine kinases which are crucial for migration, repulsion and adhesion during neuronal, vascular and epithelial development. Binds promiscuously Eph receptors residing on adjacent cells, leading to contact-dependent bidirectional signaling into neighboring cells. The signaling pathway downstream of the receptor is referred to as forward signaling while the signaling pathway downstream of the ephrin ligand is referred to as reverse signaling. With the EPHA2 receptor may play a role in bone remodeling through regulation of osteoclastogenesis and osteoblastogenesis. This Homo sapiens (Human) protein is Ephrin-A2 (EFNA2).